The primary structure comprises 1485 residues: Sex-determining transformer protein 2 (1485 aa).

The N-terminal stretch at 1 to 28 (MSLRSNKLLVAAVIFTVVTFGLLLTSSI) is a signal peptide. 9 consecutive transmembrane segments (helical) span residues 438–458 (VVYF…FFAW), 490–510 (IELN…NTYL), 584–604 (WPFI…FVDI), 732–752 (GILL…VMLI), 923–943 (LLAS…FSIT), 950–970 (LIFS…ISLF), 980–1000 (DSAV…LSLF), 1033–1053 (AQVF…AGVV), and 1063–1083 (TVIL…VLVA). Residues 1131-1271 (DFHIRPTNMS…MLHMIEKVQK (141 aa)) are interaction with fem-3. The interval 1143 to 1175 (YAPPPAKKRAKQTNNETDPEKKEDEPGTSNANN) is disordered. Residues 1181-1201 (AAHRLAILPWHFVLGGIPVDL) traverse the membrane as a helical segment. Disordered stretches follow at residues 1228–1252 (SELE…PAPE), 1275–1306 (EKEA…PSHR), and 1348–1384 (EMPP…PPHP). The span at 1275–1284 (EKEAKEKVHQ) shows a compositional bias: basic and acidic residues. The MX regulatory domain; required for tra-1 binding stretch occupies residues 1401–1422 (CEDVYWTYNDGRLPPNVAMPPR). The interval 1442–1485 (PPGQPSIPIPAEAMALREERARAHREQEQRDNSQSPSPSPEPGL) is disordered. The segment covering 1456–1472 (ALREERARAHREQEQRD) has biased composition (basic and acidic residues).

As to quaternary structure, interacts with tra-1 and fem-3. As to expression, somatic and germline tissues.

The protein localises to the membrane. Its function is as follows. Plays a major role in controlling sexual cell fates. Promotes female development in XX animals where it sequesters one or more of the FEM proteins to the membrane thereby freeing the tra-1 protein (a putative transcription factor) to enter the nucleus and promote female development. In XO animals it acts as a receptor for her-1 which prevents it from binding to FEM proteins thereby repressing the activity of tra-1. Negatively regulates male development when bound to fem-3 and is required together with tra-1 for promoting spermatogenesis. The protein is Sex-determining transformer protein 2 of Caenorhabditis remanei (Caenorhabditis vulgaris).